A 118-amino-acid polypeptide reads, in one-letter code: Ribosome-binding factor A (118 aa).

Belongs to the RbfA family. In terms of assembly, monomer. Binds 30S ribosomal subunits, but not 50S ribosomal subunits or 70S ribosomes.

It localises to the cytoplasm. One of several proteins that assist in the late maturation steps of the functional core of the 30S ribosomal subunit. Associates with free 30S ribosomal subunits (but not with 30S subunits that are part of 70S ribosomes or polysomes). Required for efficient processing of 16S rRNA. May interact with the 5'-terminal helix region of 16S rRNA. In Geobacter sulfurreducens (strain ATCC 51573 / DSM 12127 / PCA), this protein is Ribosome-binding factor A.